The chain runs to 102 residues: Signal recognition particle 19 kDa protein (102 aa).

It belongs to the SRP19 family. In terms of assembly, part of the signal recognition particle protein translocation system, which is composed of SRP and FtsY. Archaeal SRP consists of a 7S RNA molecule of 300 nucleotides and two protein subunits: SRP54 and SRP19.

It is found in the cytoplasm. Involved in targeting and insertion of nascent membrane proteins into the cytoplasmic membrane. Binds directly to 7S RNA and mediates binding of the 54 kDa subunit of the SRP. This Saccharolobus solfataricus (strain ATCC 35092 / DSM 1617 / JCM 11322 / P2) (Sulfolobus solfataricus) protein is Signal recognition particle 19 kDa protein.